The primary structure comprises 312 residues: MNYEGHLKGHRGWVTSLACPQQAGSYIKVVSTSRDGTVISWKANPDRHSVDSDYGLPNHRLEGHTGFVSCVSLAHATDYALTASWDRSIRMWDLRNGQCQRKFLKHTKDVLAVAFSPDDRLIVSAGRDNVIRVWNVAGECMHEFLRDGHEDWVSSICFSPSLEHPIVVSGSWDNTIKVWNVNGGKCERTLKGHSNYVSTVTVSPDGSLCASGGKDGAALLWDLSTGEQLFKINVESPINQIGFSPNRFWMCVATERSLSVYDLESKAVIAELTPDGAKPSECISIAWSADGNTLYSGHKDNLIRVWSISDAE.

WD repeat units follow at residues 9-42 (GHRG…ISWK), 63-93 (GHTG…RMWD), 105-135 (KHTK…RVWN), 148-180 (GHED…KVWN), 192-222 (GHSN…LLWD), 233-262 (NVES…SVYD), and 279-307 (PSEC…RVWS).

Belongs to the WD repeat G protein beta family. Ribosomal protein RACK1 subfamily.

In Leishmania major, this protein is Small ribosomal subunit protein RACK1.